The primary structure comprises 240 residues: Ribonuclease PH (240 aa).

Phosphate contacts are provided by residues arginine 87 and 125 to 127 (GTR).

The protein belongs to the RNase PH family. As to quaternary structure, homohexameric ring arranged as a trimer of dimers.

It catalyses the reaction tRNA(n+1) + phosphate = tRNA(n) + a ribonucleoside 5'-diphosphate. Its function is as follows. Phosphorolytic 3'-5' exoribonuclease that plays an important role in tRNA 3'-end maturation. Removes nucleotide residues following the 3'-CCA terminus of tRNAs; can also add nucleotides to the ends of RNA molecules by using nucleoside diphosphates as substrates, but this may not be physiologically important. Probably plays a role in initiation of 16S rRNA degradation (leading to ribosome degradation) during starvation. The sequence is that of Ribonuclease PH from Pseudomonas fluorescens (strain ATCC BAA-477 / NRRL B-23932 / Pf-5).